Reading from the N-terminus, the 362-residue chain is G-protein coupled receptor 4 (362 aa).

Residues 1 to 8 (MGNRTLEG) are Extracellular-facing. Asparagine 3 carries an N-linked (GlcNAc...) asparagine glycan. Residues 9-45 (CHVDSRMDHLFPPSLYIFVIGVGLPTNCLALWAAYRQ) traverse the membrane as a helical segment. Disulfide bonds link cysteine 9–cysteine 258 and cysteine 90–cysteine 168. Residues 46-49 (VRQR) are Cytoplasmic-facing. Residues 50-80 (NELGVYLMNLSIADLLYICTLPLWVDYFLHH) form a helical membrane-spanning segment. The Extracellular portion of the chain corresponds to 81 to 85 (DNWIH). Residues 86–121 (GPGSCKLFGFIFYTNIYISIAFLCCISVDRYLAVAH) form a helical membrane-spanning segment. At 122–129 (PLRFARLR) the chain is on the cytoplasmic side. A helical transmembrane segment spans residues 130–156 (RVKTAVAVSSVVWATELGANSAPLFHD). At 157–172 (ELFRDRYNHTFCFEKF) the chain is on the extracellular side. Residues 157 to 172 (ELFRDRYNHTFCFEKF) are extracellular loop 2 (ECL2). Asparagine 164 carries an N-linked (GlcNAc...) asparagine glycan. Residues 173-210 (PMEGWVAWMNLYRVFVGFLFPWALMLLSYRGILRAVRG) traverse the membrane as a helical segment. Residues 211 to 214 (SVST) are Cytoplasmic-facing. The helical transmembrane segment at 215–250 (ERQEKVKIKRLALSLIAIVLVCFAPYHVLLLSRSAV) threads the bilayer. The Extracellular segment spans residues 251-260 (YLRRPRDCGF). The chain crosses the membrane as a helical span at residues 261–289 (EERVFSAYHSSLAFTSLNCVADPILYCLV). Over 290–362 (NEGARSDVAK…VQLKMLPPAQ (73 aa)) the chain is Cytoplasmic.

It belongs to the G-protein coupled receptor 1 family.

The protein localises to the cell membrane. With respect to regulation, activated by a network of residues that connects an extracellular-facing cavity to Glu-145, a conserved charged residue buried in the transmembrane core of the receptor. Protonation likely drives conformational changes in extracellular loop 2 (ECL2), which stabilizes movement of transmembrane 3 (TM3) and a series of rearrangements that connect the extracellular-facing cavity to Glu-145, a residue only conserved in proton-sensing G-protein coupled receptors. Its function is as follows. Proton-sensing G-protein coupled receptor activated by extracellular pH, which is required to monitor pH changes and generate adaptive reactions. Activated by an optimal pH of 6.8-7.2. Ligand binding causes a conformation change that triggers signaling via guanine nucleotide-binding proteins (G proteins) and modulates the activity of downstream effectors, such as adenylate cyclase. GPR4 is mainly coupled to G(s) G proteins and mediates activation of adenylate cyclase activity. May also couple with G(q) and G(12)/G(13) G proteins. Acts as a key regulator of respiratory sensitivity to CO2/H(+) in brain retrotrapezoid nucleus neurons: acts by mediating detection of protons generated by the formation of carbonic acid in the blood, an important mechanism to impulse to breathe. Also acts as a regulator of acid secretion in the kidney collecting duct by maintaining acid-base homeostasis in the kidney. Acidosis-induced GPR4 activation increases paracellular gap formation and permeability of vascular endothelial cells, possibly through the G(12)/G(13)/Rho GTPase signaling pathway. This Bos taurus (Bovine) protein is G-protein coupled receptor 4 (GPR4).